The primary structure comprises 214 residues: Outer-membrane lipoprotein LolB (214 aa).

The signal sequence occupies residues Met-1–Gly-25. A lipid anchor (N-palmitoyl cysteine) is attached at Cys-26. Cys-26 is lipidated: S-diacylglycerol cysteine.

This sequence belongs to the LolB family. As to quaternary structure, monomer.

Its subcellular location is the cell outer membrane. Plays a critical role in the incorporation of lipoproteins in the outer membrane after they are released by the LolA protein. This chain is Outer-membrane lipoprotein LolB, found in Shewanella baltica (strain OS155 / ATCC BAA-1091).